The sequence spans 623 residues: Transketolase (623 aa).

M1 carries the N-acetylmethionine modification. Residues K6 and K11 each carry the N6-acetyllysine modification. Residue H37 coordinates substrate. The thiamine diphosphate site is built by S40 and H77. Residue S104 is modified to Phosphoserine. 123–125 (GSL) contacts thiamine diphosphate. N6-acetyllysine is present on K144. D155 contacts Mg(2+). G156 and N185 together coordinate thiamine diphosphate. N185 and L187 together coordinate Mg(2+). N6-acetyllysine occurs at positions 204, 232, and 241. Residues K244 and H258 each coordinate thiamine diphosphate. Position 258 (H258) interacts with substrate. An N6-acetyllysine modification is found at K260. A Phosphotyrosine modification is found at Y275. At T287 the chain carries Phosphothreonine. S295 is modified (phosphoserine). Residues R318 and S345 each contribute to the substrate site. Residue S345 is modified to Phosphoserine. K352 participates in a covalent cross-link: Glycyl lysine isopeptide (Lys-Gly) (interchain with G-Cter in SUMO2). The active-site Proton donor is E366. F392 lines the thiamine diphosphate pocket. The substrate site is built by H416 and D424. Q428 is a binding site for thiamine diphosphate. R474 is a substrate binding site. 2 positions are modified to N6-acetyllysine: K538 and K603.

It belongs to the transketolase family. As to quaternary structure, homodimer. Requires Mg(2+) as cofactor. The cofactor is Ca(2+). Mn(2+) is required as a cofactor. It depends on Co(2+) as a cofactor. Thiamine diphosphate serves as cofactor.

It carries out the reaction D-sedoheptulose 7-phosphate + D-glyceraldehyde 3-phosphate = aldehydo-D-ribose 5-phosphate + D-xylulose 5-phosphate. Its function is as follows. Catalyzes the transfer of a two-carbon ketol group from a ketose donor to an aldose acceptor, via a covalent intermediate with the cofactor thiamine pyrophosphate. This chain is Transketolase (Tkt), found in Rattus norvegicus (Rat).